The following is a 34-amino-acid chain: Trypsin inhibitor 2 (34 aa).

Residues 1–34 (SGSDGGVCPKILKKCRRDSDCPGACICRGNGYCG) constitute a cross-link (cyclopeptide (Ser-Gly)). Residues 4-5 (DG) constitute a cross-link ((2-aminosuccinimidyl)acetic acid (Asp-Gly); alternate). A cross-link (isoaspartyl glycine isopeptide (Asp-Gly); alternate) is located at residues 4–5 (DG). 3 disulfides stabilise this stretch: C8/C25, C15/C27, and C21/C33.

Post-translationally, a cyclic succinimide probably forms by loss of water between Asp-4 and Gly-5, that can then rehydrate to either the original peptide bond or to a beta-aspartyl isopeptide bond. Three isoforms of MCoTI-II are detected, two with the parent molecular weight, corresponding to the unmodified and proposed isopeptide forms, and one with a molecular weight 18 Da lower, corresponding to a succinimide cross-linked form. This is a cyclic peptide.

The protein resides in the secreted. Its function is as follows. Inhibits trypsin; probably participates in a plant defense mechanism. This is Trypsin inhibitor 2 from Momordica cochinchinensis (Spiny bitter cucumber).